Reading from the N-terminus, the 150-residue chain is Ribosome maturation factor RimP (150 aa).

This sequence belongs to the RimP family.

It is found in the cytoplasm. Its function is as follows. Required for maturation of 30S ribosomal subunits. The polypeptide is Ribosome maturation factor RimP (Acidithiobacillus ferrooxidans (strain ATCC 23270 / DSM 14882 / CIP 104768 / NCIMB 8455) (Ferrobacillus ferrooxidans (strain ATCC 23270))).